Consider the following 413-residue polypeptide: PCI domain-containing protein 2 homolog (413 aa).

The PCI domain occupies 222–403 (VAYNYFLGRK…QKLVISKTNA (182 aa)).

It belongs to the CSN12 family.

This Caenorhabditis briggsae protein is PCI domain-containing protein 2 homolog.